The chain runs to 87 residues: MARKRGGSGSKNGRDSNPKYLGVKLFGGQHARAGSILVRQRGTRIHPGENVGRGKDDTLFALAPGVVTYLQRKGRRLVSVCVENRPS.

The interval 1-20 (MARKRGGSGSKNGRDSNPKY) is disordered.

This sequence belongs to the bacterial ribosomal protein bL27 family.

This is Large ribosomal subunit protein bL27 (rpmA) from Treponema pallidum (strain Nichols).